A 596-amino-acid polypeptide reads, in one-letter code: Capsid protein VP1 (596 aa).

Belongs to the microviridae F protein family.

It localises to the virion. The protein resides in the host cytoplasm. Assembles to form an icosahedral capsid with a T=1 symmetry. The protein is Capsid protein VP1 of Chlamydia phage 1 (Bacteriophage Chp1).